Here is a 148-residue protein sequence, read N- to C-terminus: Large ribosomal subunit protein bL9 (148 aa).

It belongs to the bacterial ribosomal protein bL9 family.

In terms of biological role, binds to the 23S rRNA. This is Large ribosomal subunit protein bL9 from Staphylococcus aureus (strain Newman).